Consider the following 301-residue polypeptide: ATP synthase gamma chain (301 aa).

Belongs to the ATPase gamma chain family. F-type ATPases have 2 components, CF(1) - the catalytic core - and CF(0) - the membrane proton channel. CF(1) has five subunits: alpha(3), beta(3), gamma(1), delta(1), epsilon(1). CF(0) has three main subunits: a, b and c.

The protein localises to the cell inner membrane. Functionally, produces ATP from ADP in the presence of a proton gradient across the membrane. The gamma chain is believed to be important in regulating ATPase activity and the flow of protons through the CF(0) complex. The sequence is that of ATP synthase gamma chain from Helicobacter pylori (strain G27).